A 429-amino-acid chain; its full sequence is Cell wall protein ECM33 (429 aa).

Positions 1 to 19 (MQFKNALTATAILSASALA) are cleaved as a signal peptide. N-linked (GlcNAc...) asparagine glycosylation is found at asparagine 21, asparagine 56, asparagine 82, asparagine 196, asparagine 209, asparagine 227, asparagine 234, asparagine 241, asparagine 267, asparagine 279, asparagine 304, and asparagine 328. At serine 339 the chain carries Phosphoserine. Positions 361 to 401 (LSSTSTESSKSSATSSASSSGDASNAQANVSASASSSSSSS) are enriched in low complexity. The disordered stretch occupies residues 361 to 410 (LSSTSTESSKSSATSSASSSGDASNAQANVSASASSSSSSSKKSKGAAPE). The N-linked (GlcNAc...) asparagine glycan is linked to asparagine 389. A lipid anchor (GPI-anchor amidated glycine) is attached at glycine 406. Residues 407 to 429 (AAPELVPATSFMGVVAAVGVALL) constitute a propeptide, removed in mature form.

It belongs to the SPS2 family. Post-translationally, the GPI-anchor is attached to the protein in the endoplasmic reticulum and serves to target the protein to the cell surface. There, the glucosamine-inositol phospholipid moiety is cleaved off and the GPI-modified mannoprotein is covalently attached via its lipidless GPI glycan remnant to the 1,6-beta-glucan of the outer cell wall layer. In terms of processing, extensively N-glycosylated.

The protein localises to the cell membrane. Its subcellular location is the secreted. It localises to the cell wall. Required for proper cell wall integrity and for the correct assembly of the mannoprotein outer layer of the cell wall. Important for apical bud growth. This chain is Cell wall protein ECM33 (ECM33), found in Saccharomyces cerevisiae (strain ATCC 204508 / S288c) (Baker's yeast).